Consider the following 374-residue polypeptide: Glyceraldehyde-3-phosphate dehydrogenase A, chloroplastic (374 aa).

A chloroplast-targeting transit peptide spans 1-34; it reads MAAMMQKSAFTGSAVSSKSGVRAKAARAVVDVRA. NADP(+)-binding positions include 47–48, Asp-71, and Arg-116; that span reads RI. A disulfide bridge connects residues Cys-55 and Cys-325. Residues 189 to 191, Thr-220, Arg-235, 248 to 249, and Arg-271 contribute to the D-glyceraldehyde 3-phosphate site; these read SCT and TG. The active-site Nucleophile is the Cys-190. An NADP(+)-binding site is contributed by Asn-353.

Belongs to the glyceraldehyde-3-phosphate dehydrogenase family. Homotetramer. Component of a complex that contains two dimers of PRK, two tetramers of GAPDH and CP12. CP12 associates with GAPDH, causing its conformation to change. This GAPDH/CP12 complex binds PRK to form a half-complex (one unit). This unit probably dimerizes due partially to interactions between the enzymes of each unit.

The protein resides in the plastid. It is found in the chloroplast. It carries out the reaction D-glyceraldehyde 3-phosphate + phosphate + NADP(+) = (2R)-3-phospho-glyceroyl phosphate + NADPH + H(+). It participates in carbohydrate biosynthesis; Calvin cycle. This is Glyceraldehyde-3-phosphate dehydrogenase A, chloroplastic (GAPA) from Chlamydomonas reinhardtii (Chlamydomonas smithii).